Reading from the N-terminus, the 234-residue chain is Sugar fermentation stimulation protein homolog (234 aa).

The protein belongs to the SfsA family.

This Bartonella quintana (strain Toulouse) (Rochalimaea quintana) protein is Sugar fermentation stimulation protein homolog.